We begin with the raw amino-acid sequence, 741 residues long: Nuclear poly(A) polymerase 4 (741 aa).

ATP-binding positions include 101–103 (FGS), 113–116 (ADID), 114–116 (DID), Asp169, Lys230, Tyr239, and 248–249 (GV). The Mg(2+) site is built by Asp114, Asp116, and Asp169. The Nuclear localization signal signature appears at 485 to 492 (RRRQLPPF). 2 disordered regions span residues 494 to 556 (FPNG…LSPQ) and 683 to 741 (YEGF…RLLT). Positions 534–551 (KNDSEMMDVRPEKPEKRA) are enriched in basic and acidic residues. Positions 701 to 717 (LYSQSGMSEDLQSNSLV) are enriched in polar residues. A compositionally biased stretch (basic and acidic residues) spans 721–731 (EKSEDRARSES). Polar residues predominate over residues 732-741 (FQKSQIRLLT).

Belongs to the poly(A) polymerase family. As to quaternary structure, monomer. Forms a complex with cleavage and polyadenylation specificity factor (CPSF) subunits CFIS2, FIPS3, PAPS1, PABN1, PABN2, PABN3 and FIPS5. Mg(2+) is required as a cofactor. Mn(2+) serves as cofactor. In terms of tissue distribution, mostly expressed in flowers (very active in pollen, sepals, styles, and stigmas), cotyledons and hypocotyls, and, to a lower extent, in roots (confined to the vascular tissue in the radicle) and leaves (in the vascular tissue and leaf petioles). Barely detected in stems. Active in the primary and secondary root systems.

The protein resides in the nucleus. It carries out the reaction RNA(n) + ATP = RNA(n)-3'-adenine ribonucleotide + diphosphate. In terms of biological role, essential protein. Polymerase that creates the 3'-poly(A) tail of mRNA's. Also required for the endoribonucleolytic cleavage reaction at some polyadenylation sites. May acquire specificity through interaction with a cleavage and polyadenylation specificity factor (CPSF) at its C-terminus. The polypeptide is Nuclear poly(A) polymerase 4 (Arabidopsis thaliana (Mouse-ear cress)).